Consider the following 411-residue polypeptide: KIN17-like protein (411 aa).

Residues 28-50 (CQMCQKQCRDENGFKCHCMSESH) form a C2H2-type zinc finger. The segment at 51 to 160 (QRQMQVFGQN…KERLKNKRVK (110 aa)) is winged helix-turn-helix (wHTH). Residues 147–183 (ETLFKERLKNKRVKSDLAEEEKQEREIQRQIERAAEK) are a coiled coil. Disordered stretches follow at residues 182 to 211 (EKLNGGGGEGETSGNDEVVDDGDDERKKDE) and 232 to 286 (VATG…EEEK). Over residues 253–286 (KVERGEKRKRSGDSGRSEKERRSALDELMKEEEK) the composition is skewed to basic and acidic residues. The short motif at 259–262 (KRKR) is the Nuclear localization signal (NLS) element. Residues 265–294 (DSGRSEKERRSALDELMKEEEKKKERMNRK) adopt a coiled-coil conformation. Residues 301 to 352 (GIIVKVMSKALAEKGYYKQKGVVKKVIDNYVGEIKMLDSKHVLRVDQKELET) form a C-terminal subdomain A region. The tract at residues 358 to 409 (GGMVKIVNGAYRGSNARLLGVDTEKFCAKVQIEKGVYDGRVIKSIEYEDICK) is C-terminal subdomain B.

The protein belongs to the KIN17 family. In terms of assembly, interacts with SPL7. Expressed in root vasculature, lateral roots, cotyledons, rosette leaves, cauline leaves, stems, sepals, style of pistils, mature pollen grains and siliques.

It localises to the nucleus speckle. Its function is as follows. Promotes the copper deficiency response by direct interaction with SPL7. Acts with SPL7 in a common pathway to promote copper-responsive genes and alleviate oxidative stress during copper-limiting periods. May promote SPL7 function when copper is limiting. Participates in the control of general plant growth and development, and in the response to counteract the negative effects of UV radiation. This is KIN17-like protein from Arabidopsis thaliana (Mouse-ear cress).